Consider the following 122-residue polypeptide: Holo-[acyl-carrier-protein] synthase (122 aa).

The Mg(2+) site is built by Asp-8 and Glu-55.

This sequence belongs to the P-Pant transferase superfamily. AcpS family. Mg(2+) serves as cofactor.

Its subcellular location is the cytoplasm. It carries out the reaction apo-[ACP] + CoA = holo-[ACP] + adenosine 3',5'-bisphosphate + H(+). In terms of biological role, transfers the 4'-phosphopantetheine moiety from coenzyme A to a Ser of acyl-carrier-protein. The sequence is that of Holo-[acyl-carrier-protein] synthase from Fusobacterium nucleatum subsp. nucleatum (strain ATCC 25586 / DSM 15643 / BCRC 10681 / CIP 101130 / JCM 8532 / KCTC 2640 / LMG 13131 / VPI 4355).